Consider the following 85-residue polypeptide: Small ribosomal subunit protein uS17 (85 aa).

This sequence belongs to the universal ribosomal protein uS17 family. As to quaternary structure, part of the 30S ribosomal subunit.

In terms of biological role, one of the primary rRNA binding proteins, it binds specifically to the 5'-end of 16S ribosomal RNA. The protein is Small ribosomal subunit protein uS17 of Geobacter sp. (strain M21).